We begin with the raw amino-acid sequence, 194 residues long: Putative 3-methyladenine DNA glycosylase (194 aa).

Belongs to the DNA glycosylase MPG family.

This Chlamydia felis (strain Fe/C-56) (Chlamydophila felis) protein is Putative 3-methyladenine DNA glycosylase.